The chain runs to 388 residues: Succinate--CoA ligase [ADP-forming] subunit beta (388 aa).

In terms of domain architecture, ATP-grasp spans 9 to 244 (KGVLSSFGVT…PDEYAAEELE (236 aa)). Residues Lys46, 53-55 (GRG), Glu99, Val102, and Glu107 contribute to the ATP site. Mg(2+)-binding residues include Asn199 and Asp213. Substrate contacts are provided by residues Asn264 and 320–322 (GIM).

Belongs to the succinate/malate CoA ligase beta subunit family. As to quaternary structure, heterotetramer of two alpha and two beta subunits. Mg(2+) is required as a cofactor.

It carries out the reaction succinate + ATP + CoA = succinyl-CoA + ADP + phosphate. The enzyme catalyses GTP + succinate + CoA = succinyl-CoA + GDP + phosphate. Its pathway is carbohydrate metabolism; tricarboxylic acid cycle; succinate from succinyl-CoA (ligase route): step 1/1. Succinyl-CoA synthetase functions in the citric acid cycle (TCA), coupling the hydrolysis of succinyl-CoA to the synthesis of either ATP or GTP and thus represents the only step of substrate-level phosphorylation in the TCA. The beta subunit provides nucleotide specificity of the enzyme and binds the substrate succinate, while the binding sites for coenzyme A and phosphate are found in the alpha subunit. The protein is Succinate--CoA ligase [ADP-forming] subunit beta of Anaplasma marginale (strain St. Maries).